Here is a 371-residue protein sequence, read N- to C-terminus: 4-hydroxy-3-methylbut-2-en-1-yl diphosphate synthase (flavodoxin) (371 aa).

[4Fe-4S] cluster-binding residues include Cys-268, Cys-271, Cys-303, and Glu-310.

The protein belongs to the IspG family. It depends on [4Fe-4S] cluster as a cofactor.

The enzyme catalyses (2E)-4-hydroxy-3-methylbut-2-enyl diphosphate + oxidized [flavodoxin] + H2O + 2 H(+) = 2-C-methyl-D-erythritol 2,4-cyclic diphosphate + reduced [flavodoxin]. Its pathway is isoprenoid biosynthesis; isopentenyl diphosphate biosynthesis via DXP pathway; isopentenyl diphosphate from 1-deoxy-D-xylulose 5-phosphate: step 5/6. Converts 2C-methyl-D-erythritol 2,4-cyclodiphosphate (ME-2,4cPP) into 1-hydroxy-2-methyl-2-(E)-butenyl 4-diphosphate. The sequence is that of 4-hydroxy-3-methylbut-2-en-1-yl diphosphate synthase (flavodoxin) from Lysinibacillus sphaericus (strain C3-41).